Here is a 136-residue protein sequence, read N- to C-terminus: MILNWKLLGILVLCLHTRGISGSEGHPSHPPAEDREEAGSPTLPQGPPVPGDPWPGAPPLFEDPPPTRPSRPWRDLPETGVWLPEPPRTDPPQPPRPDDPWPAGPQPPENPWPPAPEVDNRPQEEPDLDPPREEYR.

Residues 1–22 form the signal peptide; sequence MILNWKLLGILVLCLHTRGISG. A disordered region spans residues 20–136; that stretch reads ISGSEGHPSH…DLDPPREEYR (117 aa). Composition is skewed to pro residues over residues 44–69 and 84–116; these read PQGP…PTRP and PEPP…PPAP. Residues 118-136 are compositionally biased toward basic and acidic residues; sequence VDNRPQEEPDLDPPREEYR.

In terms of tissue distribution, expressed in skin. Also expressed in heart and skeletal muscle.

The protein resides in the secreted. The chain is Psoriasis susceptibility 1 candidate gene 2 protein (PSORS1C2) from Homo sapiens (Human).